The following is a 58-amino-acid chain: Small ribosomal subunit protein bS21 (58 aa).

A disordered region spans residues 34 to 58; the sequence is KREHYEKPSVKRKKKSEAARKRKFK. A compositionally biased stretch (basic residues) spans 43–58; sequence VKRKKKSEAARKRKFK.

This sequence belongs to the bacterial ribosomal protein bS21 family.

The sequence is that of Small ribosomal subunit protein bS21 from Clostridium acetobutylicum (strain ATCC 824 / DSM 792 / JCM 1419 / IAM 19013 / LMG 5710 / NBRC 13948 / NRRL B-527 / VKM B-1787 / 2291 / W).